The chain runs to 257 residues: Imidazole glycerol phosphate synthase subunit HisF (257 aa).

Catalysis depends on residues D12 and D131.

Belongs to the HisA/HisF family. In terms of assembly, heterodimer of HisH and HisF.

The protein localises to the cytoplasm. It carries out the reaction 5-[(5-phospho-1-deoxy-D-ribulos-1-ylimino)methylamino]-1-(5-phospho-beta-D-ribosyl)imidazole-4-carboxamide + L-glutamine = D-erythro-1-(imidazol-4-yl)glycerol 3-phosphate + 5-amino-1-(5-phospho-beta-D-ribosyl)imidazole-4-carboxamide + L-glutamate + H(+). It participates in amino-acid biosynthesis; L-histidine biosynthesis; L-histidine from 5-phospho-alpha-D-ribose 1-diphosphate: step 5/9. IGPS catalyzes the conversion of PRFAR and glutamine to IGP, AICAR and glutamate. The HisF subunit catalyzes the cyclization activity that produces IGP and AICAR from PRFAR using the ammonia provided by the HisH subunit. The polypeptide is Imidazole glycerol phosphate synthase subunit HisF (Mycobacteroides abscessus (strain ATCC 19977 / DSM 44196 / CCUG 20993 / CIP 104536 / JCM 13569 / NCTC 13031 / TMC 1543 / L948) (Mycobacterium abscessus)).